Consider the following 585-residue polypeptide: 1-deoxy-D-xylulose-5-phosphate synthase (585 aa).

Thiamine diphosphate is bound by residues H80 and 121 to 123; that span reads GHS. D152 contributes to the Mg(2+) binding site. Residues 153 to 154, N181, Y259, and E334 contribute to the thiamine diphosphate site; that span reads GS. Residue N181 participates in Mg(2+) binding.

The protein belongs to the transketolase family. DXPS subfamily. Homodimer. The cofactor is Mg(2+). Thiamine diphosphate is required as a cofactor.

The enzyme catalyses D-glyceraldehyde 3-phosphate + pyruvate + H(+) = 1-deoxy-D-xylulose 5-phosphate + CO2. Its pathway is metabolic intermediate biosynthesis; 1-deoxy-D-xylulose 5-phosphate biosynthesis; 1-deoxy-D-xylulose 5-phosphate from D-glyceraldehyde 3-phosphate and pyruvate: step 1/1. Its function is as follows. Catalyzes the acyloin condensation reaction between C atoms 2 and 3 of pyruvate and glyceraldehyde 3-phosphate to yield 1-deoxy-D-xylulose-5-phosphate (DXP). This is 1-deoxy-D-xylulose-5-phosphate synthase from Buchnera aphidicola subsp. Schizaphis graminum (strain Sg).